A 315-amino-acid polypeptide reads, in one-letter code: Ribosomal RNA small subunit methyltransferase H (315 aa).

S-adenosyl-L-methionine contacts are provided by residues 61–63 (GGH), D80, F108, D124, and Q131. Residues 291 to 315 (PQPEEEEKNPRSRSAKLRFAQRKPL) form a disordered region. The span at 301 to 315 (RSRSAKLRFAQRKPL) shows a compositional bias: basic residues.

It belongs to the methyltransferase superfamily. RsmH family.

The protein localises to the cytoplasm. It catalyses the reaction cytidine(1402) in 16S rRNA + S-adenosyl-L-methionine = N(4)-methylcytidine(1402) in 16S rRNA + S-adenosyl-L-homocysteine + H(+). In terms of biological role, specifically methylates the N4 position of cytidine in position 1402 (C1402) of 16S rRNA. The sequence is that of Ribosomal RNA small subunit methyltransferase H from Crocosphaera subtropica (strain ATCC 51142 / BH68) (Cyanothece sp. (strain ATCC 51142)).